A 56-amino-acid chain; its full sequence is Zinc finger mu-protein HVO_0758 (56 aa).

Positions 23, 26, 45, and 48 each coordinate Zn(2+). 2 consecutive short sequence motifs (c(P)XCG motif) follow at residues 23 to 27 (CSECG) and 45 to 49 (CADCG).

Monomer.

Functionally, zinc-binding protein that binds one zinc ion. Is involved in biofilm formation, swarming and glycerol metabolism regulation. This Haloferax volcanii (strain ATCC 29605 / DSM 3757 / JCM 8879 / NBRC 14742 / NCIMB 2012 / VKM B-1768 / DS2) (Halobacterium volcanii) protein is Zinc finger mu-protein HVO_0758.